Reading from the N-terminus, the 520-residue chain is Cytosol aminopeptidase (520 aa).

Positions 286 and 291 each coordinate Zn(2+). Residue Lys-298 is part of the active site. The Zn(2+) site is built by Asp-309, Asp-368, and Glu-370. The active site involves Arg-372.

This sequence belongs to the peptidase M17 family. In terms of assembly, homohexamer. The cofactor is Zn(2+).

The protein resides in the cytoplasm. The catalysed reaction is Release of an N-terminal amino acid, Xaa-|-Yaa-, in which Xaa is preferably Leu, but may be other amino acids including Pro although not Arg or Lys, and Yaa may be Pro. Amino acid amides and methyl esters are also readily hydrolyzed, but rates on arylamides are exceedingly low.. The enzyme catalyses Release of N-terminal proline from a peptide.. In terms of biological role, presumably involved in the processing and regular turnover of intracellular proteins. Catalyzes the removal of unsubstituted N-terminal amino acids from various peptides. In Dictyostelium discoideum (Social amoeba), this protein is Cytosol aminopeptidase (lap).